Here is a 423-residue protein sequence, read N- to C-terminus: Imidazolonepropionase (423 aa).

Fe(3+) is bound by residues H78 and H80. Zn(2+) is bound by residues H78 and H80. R87, Y150, and H183 together coordinate 4-imidazolone-5-propanoate. Residue Y150 coordinates N-formimidoyl-L-glutamate. Position 247 (H247) interacts with Fe(3+). Zn(2+) is bound at residue H247. E250 contacts 4-imidazolone-5-propanoate. Residue D322 coordinates Fe(3+). D322 is a binding site for Zn(2+). 2 residues coordinate N-formimidoyl-L-glutamate: N324 and G326. 4-imidazolone-5-propanoate is bound at residue S327.

It belongs to the metallo-dependent hydrolases superfamily. HutI family. Zn(2+) is required as a cofactor. Fe(3+) serves as cofactor.

Its subcellular location is the cytoplasm. It carries out the reaction 4-imidazolone-5-propanoate + H2O = N-formimidoyl-L-glutamate. Its pathway is amino-acid degradation; L-histidine degradation into L-glutamate; N-formimidoyl-L-glutamate from L-histidine: step 3/3. Functionally, catalyzes the hydrolytic cleavage of the carbon-nitrogen bond in imidazolone-5-propanoate to yield N-formimidoyl-L-glutamate. It is the third step in the universal histidine degradation pathway. This Bacillus cereus (strain B4264) protein is Imidazolonepropionase.